Reading from the N-terminus, the 150-residue chain is Large ribosomal subunit protein bL9 (150 aa).

This sequence belongs to the bacterial ribosomal protein bL9 family.

In terms of biological role, binds to the 23S rRNA. The polypeptide is Large ribosomal subunit protein bL9 (Vibrio campbellii (strain ATCC BAA-1116)).